The sequence spans 699 residues: MSTSTPQSGGRRKPETPDSAFLSPATRPQPISAAATPTLLNFTSNDDERERKLRRMSRVIDLQLSNANSPATAISPAQSRGADTPTSLLPKLNNTQISDHYSTCIKLSQENKITTKNAFGLHLIDYMGDILKHKDSELTNFKVAAGTLDASAKIYAVRVDAVHADVYKVLGGLGKESQATEDTENQETDTGPQDGRKNPKRRKCSYKTIERNLNSINRSETERKSEIDPLFQKAAASFDEFSTAGVFLSTLKCHSYHSELHFDADVKPLSTAEETEPPSPGSMDSTELKSLFLQCVEKRPLCPSLSGFRFMQWNSDAQNENLSLLMDKFKKSDHVFDINAEVEDDFVESEAPVADEFDADVCEGMDAGDIGEFAEHREACRLERKGAQLTQIGNGDIGTMCLQLSSCPGEYSYFSPRTMSMWAGPEHWRFRPRQKASTDSDQQRVKKAKKVFELNFEDDIDFEVHFRKTRAATTLTKSTLESQNKKSTTLPADFHYDPDNIARMSLRPKDRIRKTTVQESVSEPEDDIGDYDYNNPNDTSNFCPALQAADSDDDDGAFLGPESNSAGFSAENQMNITSYGESNLVAGQKVNKIEIQYAKTAKKMDMKRLKSSMWSLLANCPESQEEMPSSKEEIDAALITDEQVFSSVTHGLQKRLPPVMAQNLSVPLAFACLLHLANEKNLKLQGMDDLSDVMIMQDD.

2 disordered regions span residues 1 to 35 (MSTSTPQSGGRRKPETPDSAFLSPATRPQPISAAA) and 176 to 203 (ESQATEDTENQETDTGPQDGRKNPKRRK).

It belongs to the CND2 (condensin subunit 2) family. In terms of assembly, component of the condensin complex, which contains the XCAP-E/SMC2 and XCAP-C/SMC4 heterodimer, and three non SMC subunits that probably regulate the complex: XCAP-H/NCAPH, XCAP-D2/NCAPD2 and XCAP-G/NCAPG. Phosphorylated by CDK1. Its phosphorylation, as well as that of XCAP-D2 and XCAP-G subunits, activates the condensin complex and is required for chromosome condensation.

The protein localises to the nucleus. The protein resides in the cytoplasm. It localises to the chromosome. Its function is as follows. Regulatory subunit of the condensin complex, a complex required for conversion of interphase chromatin into mitotic-like condense chromosomes. The condensin complex probably introduces positive supercoils into relaxed DNA in the presence of type I topoisomerases and converts nicked DNA into positive knotted forms in the presence of type II topoisomerase. This Xenopus laevis (African clawed frog) protein is Condensin complex subunit 2 (ncaph).